Reading from the N-terminus, the 177-residue chain is ATP-dependent protease subunit HslV (177 aa).

Residue Thr2 is part of the active site. Positions 158, 161, and 164 each coordinate Na(+).

This sequence belongs to the peptidase T1B family. HslV subfamily. As to quaternary structure, a double ring-shaped homohexamer of HslV is capped on each side by a ring-shaped HslU homohexamer. The assembly of the HslU/HslV complex is dependent on binding of ATP.

Its subcellular location is the cytoplasm. The enzyme catalyses ATP-dependent cleavage of peptide bonds with broad specificity.. Allosterically activated by HslU binding. Functionally, protease subunit of a proteasome-like degradation complex believed to be a general protein degrading machinery. The sequence is that of ATP-dependent protease subunit HslV from Pseudomonas aeruginosa (strain LESB58).